A 188-amino-acid polypeptide reads, in one-letter code: Elongation factor P (188 aa).

This sequence belongs to the elongation factor P family.

It localises to the cytoplasm. It participates in protein biosynthesis; polypeptide chain elongation. Its function is as follows. Involved in peptide bond synthesis. Stimulates efficient translation and peptide-bond synthesis on native or reconstituted 70S ribosomes in vitro. Probably functions indirectly by altering the affinity of the ribosome for aminoacyl-tRNA, thus increasing their reactivity as acceptors for peptidyl transferase. This is Elongation factor P from Streptomyces coelicolor (strain ATCC BAA-471 / A3(2) / M145).